The following is a 350-amino-acid chain: Probable dual-specificity RNA methyltransferase RlmN (350 aa).

Glu93 functions as the Proton acceptor in the catalytic mechanism. A Radical SAM core domain is found at 99-327 (SSKRLTVCVS…VSVRYSRGVQ (229 aa)). Cys106 and Cys332 form a disulfide bridge. Cys113, Cys117, and Cys120 together coordinate [4Fe-4S] cluster. Residues 160-161 (GE), Ser190, 213-215 (SLH), and Asn289 contribute to the S-adenosyl-L-methionine site. The active-site S-methylcysteine intermediate is the Cys332.

Belongs to the radical SAM superfamily. RlmN family. It depends on [4Fe-4S] cluster as a cofactor.

The protein resides in the cytoplasm. The enzyme catalyses adenosine(2503) in 23S rRNA + 2 reduced [2Fe-2S]-[ferredoxin] + 2 S-adenosyl-L-methionine = 2-methyladenosine(2503) in 23S rRNA + 5'-deoxyadenosine + L-methionine + 2 oxidized [2Fe-2S]-[ferredoxin] + S-adenosyl-L-homocysteine. It catalyses the reaction adenosine(37) in tRNA + 2 reduced [2Fe-2S]-[ferredoxin] + 2 S-adenosyl-L-methionine = 2-methyladenosine(37) in tRNA + 5'-deoxyadenosine + L-methionine + 2 oxidized [2Fe-2S]-[ferredoxin] + S-adenosyl-L-homocysteine. Its function is as follows. Specifically methylates position 2 of adenine 2503 in 23S rRNA and position 2 of adenine 37 in tRNAs. The chain is Probable dual-specificity RNA methyltransferase RlmN from Synechocystis sp. (strain ATCC 27184 / PCC 6803 / Kazusa).